Here is a 911-residue protein sequence, read N- to C-terminus: Epithelial discoidin domain-containing receptor 1 (911 aa).

The signal sequence occupies residues 1 to 19 (MGTGTLSSLLLLLLLVTIG). Topologically, residues 22–415 (DMKGHFDPAK…VAKAEGSPTA (394 aa)) are extracellular. Residues 32 to 186 (CRYALGMQDR…VCLRVELYGC (155 aa)) enclose the F5/8 type C domain. 2 disulfide bridges follow: Cys32/Cys186 and Cys75/Cys178. The segment at 193 to 369 (LSYTAPVGQT…LFSEISFISD (177 aa)) is DS-like domain. 6 residues coordinate Ca(2+): Asn213, Gln232, Asp235, Val237, Tyr255, and Tyr257. Asn213 carries N-linked (GlcNAc...) asparagine glycosylation. A glycan (N-linked (GlcNAc...) asparagine) is linked at Asn262. The cysteines at positions 305 and 350 are disulfide-linked. Ser362 and Glu363 together coordinate Ca(2+). Asn372 and Asn392 each carry an N-linked (GlcNAc...) asparagine glycan. Residues 416-436 (ILIGCLVAIILLLLLIIALML) traverse the membrane as a helical segment. Residues 437–911 (WRLHWRRLLS…FLADDALNTV (475 aa)) lie on the Cytoplasmic side of the membrane. The disordered stretch occupies residues 468-496 (ILINNRPGPREPPPYQEPRPRGTPPHSAP). Pro residues predominate over residues 477 to 494 (REPPPYQEPRPRGTPPHS). The PPxY motif signature appears at 479-482 (PPPY). A phosphotyrosine; by autocatalysis mark is found at Tyr482, Tyr511, and Tyr518. Residues 608 to 903 (LRFKEKLGEG…PPFAQLHRFL (296 aa)) enclose the Protein kinase domain. ATP-binding positions include 614 to 622 (LGEGQFGEV) and Lys653. At Tyr738 the chain carries Phosphotyrosine; by autocatalysis. Asp764 functions as the Proton acceptor in the catalytic mechanism. 3 positions are modified to phosphotyrosine; by autocatalysis: Tyr790, Tyr794, and Tyr795.

It belongs to the protein kinase superfamily. Tyr protein kinase family. Insulin receptor subfamily. As to quaternary structure, homodimer. Interacts (via PPxY motif) with WWC1 (via WW domains) in a collagen-regulated manner. Forms a tripartite complex with WWC1 and PRKCZ, but predominantly in the absence of collagen. Interacts (tyrosine phosphorylated) with SHC1. Interacts with SRC. Interacts with MYH9. Interacts with CDH1. Interacts with PTPN11. Interacts with NCK2. Autophosphorylated in response to fibrillar collagen binding. Detected in the cochlea and the organ of Corti in the inner ear. Isoform 1 is predominant and is expressed in developing embryo and adult brain. Isoform 2 is expressed in various epithelial cells.

The protein resides in the cell membrane. It catalyses the reaction L-tyrosyl-[protein] + ATP = O-phospho-L-tyrosyl-[protein] + ADP + H(+). Its function is as follows. Tyrosine kinase that functions as a cell surface receptor for fibrillar collagen and regulates cell attachment to the extracellular matrix, remodeling of the extracellular matrix, cell migration, differentiation, survival and cell proliferation. Collagen binding triggers a signaling pathway that involves SRC and leads to the activation of MAP kinases. Regulates remodeling of the extracellular matrix by up-regulation of the matrix metalloproteinases MMP2, MMP7 and MMP9, and thereby facilitates cell migration and wound healing, but also tumor cell invasion. Promotes smooth muscle cell migration, and thereby contributes to arterial wound healing. Phosphorylates PTPN11. Required for normal blastocyst implantation during pregnancy, for normal mammary gland differentiation and normal lactation. Required for normal ear morphology and normal hearing. The protein is Epithelial discoidin domain-containing receptor 1 (Ddr1) of Mus musculus (Mouse).